Consider the following 1582-residue polypeptide: Adhesion G protein-coupled receptor B1 (1582 aa).

A signal peptide spans 1–33 (MRGQAAAPGPIWILAPLLLLLLLLGRWARAASG). Topologically, residues 34–948 (ADIGPGTEQC…ATMDKVTVPS (915 aa)) are extracellular. Residue asparagine 64 is glycosylated (N-linked (GlcNAc...) asparagine). The 55-residue stretch at 261–315 (AGGWKLWSLWGECTRDCGGGLQTRTRTCLPTLGVEGGGCEGVLEEGRLCNRKACG) folds into the TSP type-1 1 domain. Disulfide bonds link cysteine 273–cysteine 309, cysteine 277–cysteine 314, and cysteine 288–cysteine 299. The disordered stretch occupies residues 313-335 (ACGPTGRSSSRSQSLRSTDARRR). The span at 319-329 (RSSSRSQSLRS) shows a compositional bias: low complexity. 4 consecutive TSP type-1 domains span residues 354-407 (DPAA…AVCP), 409-462 (HGAW…ALCP), 467-520 (DGNW…QQCP), and 522-575 (DGKW…QRCP). Cystine bridges form between cysteine 366-cysteine 400, cysteine 370-cysteine 406, cysteine 381-cysteine 390, cysteine 421-cysteine 456, cysteine 425-cysteine 461, cysteine 436-cysteine 446, cysteine 479-cysteine 514, cysteine 483-cysteine 519, cysteine 494-cysteine 504, cysteine 534-cysteine 569, cysteine 538-cysteine 574, cysteine 549-cysteine 559, cysteine 581-cysteine 616, and cysteine 604-cysteine 634. An N-linked (GlcNAc...) asparagine glycan is attached at asparagine 401. An N-linked (GlcNAc...) asparagine glycan is attached at asparagine 607. Position 609 is a phosphothreonine (threonine 609). Asparagine 692, asparagine 844, asparagine 877, and asparagine 881 each carry an N-linked (GlcNAc...) asparagine glycan. Residues 760-939 (RDAYQVTDNL…AILAQLSADA (180 aa)) enclose the GAIN-B domain. 2 disulfide bridges follow: cysteine 884-cysteine 921 and cysteine 909-cysteine 923. The interval 884–939 (CILWDETDGPSSSAPPQLGPWSWRGCRTVPLDALRTRCLCDRLSTFAILAQLSADA) is GPS. The interval 927-943 (STFAILAQLSADATMDK) is N-terminal stalk following vasculostatin-120 cleavage which is not required for signaling activity. A helical transmembrane segment spans residues 949–969 (VTLIVGCGVSSLTLLMLVIIY). Topologically, residues 970 to 980 (VSVWRYIRSER) are cytoplasmic. The helical transmembrane segment at 981 to 1001 (SVILINFCLSIISSNALILIG) threads the bilayer. Over 1002–1008 (QTQTRNK) the chain is Extracellular. The helical transmembrane segment at 1009 to 1029 (VVCTLVAAFLHFFFLSSFCWV) threads the bilayer. The Cytoplasmic portion of the chain corresponds to 1030–1052 (LTEAWQSYMAVTGRLRSRLVRKR). Residues 1053–1073 (FLCLGWGLPALVVAISVGFTK) traverse the membrane as a helical segment. The Extracellular portion of the chain corresponds to 1074 to 1093 (AKGYSTMNYCWLSLEGGLLY). The chain crosses the membrane as a helical span at residues 1094-1114 (AFVGPAAAVVLVNMVIGILVF). Topologically, residues 1115–1136 (NKLVSKDGITDKKLKERAGASL) are cytoplasmic. The chain crosses the membrane as a helical span at residues 1137 to 1157 (WSSCVVLPLLALTWMSAVLAV). Residues 1158–1166 (TDRRSALFQ) are Extracellular-facing. Residues 1167-1187 (ILFAVFDSLEGFVIVMVHCIL) form a helical membrane-spanning segment. Residues 1188–1582 (RREVQDAVKC…QDIIDLQTEV (395 aa)) lie on the Cytoplasmic side of the membrane. The involved in interaction with MAGI1 stretch occupies residues 1363 to 1582 (YSINIDQMPQ…QDIIDLQTEV (220 aa)). The interval 1382 to 1549 (PDASFPTRSP…AWVKKELEPL (168 aa)) is disordered. The span at 1389–1435 (RSPPAREPPGGAPPEVPPVQPPPPPPPPPPPPQQPIPPPPTLEPAPP) shows a compositional bias: pro residues. The span at 1441–1455 (GEPAAHPGPSSGAGA) shows a compositional bias: low complexity. A Phosphoserine modification is found at serine 1467. Basic and acidic residues-rich tracts occupy residues 1468–1484 (LERR…EKIM) and 1491–1520 (QDMF…KPEK). The segment at 1579–1582 (QTEV) is indispensable for interaction with MAGI1.

The protein belongs to the G-protein coupled receptor 2 family. LN-TM7 subfamily. As to quaternary structure, interacts with ELMO1 and DOCK1. When bound to ELMO1 and DOCK1, acts as a module to promote apoptotic cell engulfment. Interacts with MDM2; the interaction results in inhibition of MDM2-mediated ubiquitination and degradation of DLG4/PSD95. Interacts with PARD3 and TIAM1; the interaction is required for correct dendritic localization of PARD3 and TIAM1 and for dendritic spine formation. Interacts with MAGI1, MAGI3 and BAIAP2. Interacts with PHYHIP. Interacts with DLG4 (via PDZ domain). Vasculostatin-120: Interacts with CD36. Vasculostatin-120: Interacts with ARRB2. Interacts with BAIAP3; this interaction is direct. Post-translationally, proteolytically cleaved to produce vasculostatin-40 and vasculostatin-120. Vasculostatin-40 is the major form and is produced through proteolytic cleavage by MMP14 between residues 321 and 329 with cleavage likely to be between Ser-326 and Leu-327. Ubiquitinated. In brain, widespread expression in all neuropil-rich zones including spinal cord gray matter, cerebellar molecular layer, cerebral cortex, thalamic nuclei and basal ganglia with no expression in white matter (at protein level). In the cerebellar molecular layer, highly expressed in interneuron processes whereas Purkinje cells and their dendrites show weaker expression (at protein level). In the olfactory bulb, highly expressed in glomeruli (at protein level). In the retina, highly concentrated in the outer and inner plexiform layers (at protein level). Expressed in brain. Enriched in hippocampus and cortex. Also detected in other tissues including bone marrow and spleen.

It is found in the cell membrane. Its subcellular location is the cell projection. The protein localises to the phagocytic cup. The protein resides in the cell junction. It localises to the focal adhesion. It is found in the dendritic spine. Its subcellular location is the postsynaptic density. The protein localises to the secreted. Functionally, phosphatidylserine receptor which enhances the engulfment of apoptotic cells. Also mediates the binding and engulfment of Gram-negative bacteria. Stimulates production of reactive oxygen species by macrophages in response to Gram-negative bacteria, resulting in enhanced microbicidal macrophage activity. In the gastric mucosa, required for recognition and engulfment of apoptotic gastric epithelial cells. Promotes myoblast fusion. Activates the Rho pathway in a G-protein-dependent manner. Inhibits MDM2-mediated ubiquitination and degradation of DLG4/PSD95, promoting DLG4 stability and regulating synaptic plasticity. Required for the formation of dendritic spines by ensuring the correct localization of PARD3 and TIAM1. Potent inhibitor of angiogenesis in brain and may play a significant role as a mediator of the p53/TP53 signal in suppression of glioblastoma. In terms of biological role, inhibits angiogenesis in a CD36-dependent manner. Its function is as follows. Inhibits angiogenesis. This Mus musculus (Mouse) protein is Adhesion G protein-coupled receptor B1.